Consider the following 137-residue polypeptide: Small ribosomal subunit protein uS12 (137 aa).

Disordered regions lie at residues 1–21 and 34–57; these read MPTI…KSDS and VHTK…TPKK. Aspartate 102 is subject to 3-methylthioaspartic acid.

Belongs to the universal ribosomal protein uS12 family. As to quaternary structure, part of the 30S ribosomal subunit. Contacts proteins S8 and S17. May interact with IF1 in the 30S initiation complex.

With S4 and S5 plays an important role in translational accuracy. In terms of biological role, interacts with and stabilizes bases of the 16S rRNA that are involved in tRNA selection in the A site and with the mRNA backbone. Located at the interface of the 30S and 50S subunits, it traverses the body of the 30S subunit contacting proteins on the other side and probably holding the rRNA structure together. The combined cluster of proteins S8, S12 and S17 appears to hold together the shoulder and platform of the 30S subunit. The polypeptide is Small ribosomal subunit protein uS12 (Streptococcus equi subsp. zooepidemicus (strain H70)).